Reading from the N-terminus, the 150-residue chain is Probable histone H2A.7 (150 aa).

Residues 1-12 (MESTGKVKKAFG) show a composition bias toward basic residues. Disordered stretches follow at residues 1–27 (MEST…SVSK) and 129–150 (KSAT…PKKA). Ser146 carries the phosphoserine modification. An SPKK motif motif is present at residues 146-149 (SPKK).

It belongs to the histone H2A family. As to quaternary structure, the nucleosome is a histone octamer containing two molecules each of H2A, H2B, H3 and H4 assembled in one H3-H4 heterotetramer and two H2A-H2B heterodimers. The octamer wraps approximately 147 bp of DNA. In terms of processing, not ubiquitinated. As to expression, strong expression through-out the roots and leaves. Also found in meristems and dividing cells.

It localises to the nucleus. It is found in the chromosome. Functionally, core component of nucleosome. Nucleosomes wrap and compact DNA into chromatin, limiting DNA accessibility to the cellular machineries which require DNA as a template. Histones thereby play a central role in transcription regulation, DNA repair, DNA replication and chromosomal stability. DNA accessibility is regulated via a complex set of post-translational modifications of histones, also called histone code, and nucleosome remodeling. The polypeptide is Probable histone H2A.7 (Arabidopsis thaliana (Mouse-ear cress)).